The primary structure comprises 174 residues: Large ribosomal subunit protein bL12cy (174 aa).

The N-terminal 45 residues, Met-1–Thr-45, are a transit peptide targeting the chloroplast.

The protein belongs to the bacterial ribosomal protein bL12 family.

It is found in the plastid. The protein localises to the chloroplast. This Secale cereale (Rye) protein is Large ribosomal subunit protein bL12cy (RPL12-2).